The primary structure comprises 96 residues: Co-chaperonin GroES (96 aa).

Belongs to the GroES chaperonin family. As to quaternary structure, heptamer of 7 subunits arranged in a ring. Interacts with the chaperonin GroEL.

The protein resides in the cytoplasm. Its function is as follows. Together with the chaperonin GroEL, plays an essential role in assisting protein folding. The GroEL-GroES system forms a nano-cage that allows encapsulation of the non-native substrate proteins and provides a physical environment optimized to promote and accelerate protein folding. GroES binds to the apical surface of the GroEL ring, thereby capping the opening of the GroEL channel. This Neisseria meningitidis serogroup B (strain ATCC BAA-335 / MC58) protein is Co-chaperonin GroES.